The primary structure comprises 123 residues: Cholecystokinin (123 aa).

Positions 1–19 (MNAGICVCVLLAALSTSSC) are cleaved as a signal peptide. The propeptide occupies 20–103 (LSLPAVSEDG…MGNNHRIKDR (84 aa)). Residues 43 to 67 (HTRAAPSSGQLSLLSKAEDDEEPRS) form a disordered region. Sulfotyrosine is present on tyrosine 105. Phenylalanine 111 carries the phenylalanine amide modification. Residues 115 to 123 (SAEEYEYSS) constitute a propeptide that is removed on maturation. Tyrosine 119 and tyrosine 121 each carry sulfotyrosine.

Belongs to the gastrin/cholecystokinin family. The precursor is cleaved by proteases to produce a number of active cholecystokinins. In terms of tissue distribution, expressed in the ovary, kidney, gill, gastrointestinal tract and pituitary. Differentially expressed in the brain in the optic tectum-thalamus, hypothalamus, telencephalon, olfactory bulb and tract, preoptic region and posterior brain region. Expression is strongest in the hypothalamus, where localization is to the posterior ventrolateral region. Expression in the brain is transiently increased 2 hours after feeding. Abundant in the sensory layers of the vagal lobe and along the border of the sensory region of the lobe and the deep fiber laye. Also present in the facial lobe and throughout the glossopharyngeal lobe.

It localises to the secreted. In terms of biological role, this peptide hormone induces gall bladder contraction and the release of pancreatic enzymes in the gut. Induces the secretion of gonadotropin and growth hormone from the pituitary. Suppresses food intake and decreases the expression of preprosomatostatin genes in the forebrain. The protein is Cholecystokinin (cck) of Carassius auratus (Goldfish).